We begin with the raw amino-acid sequence, 347 residues long: NADH-ubiquinone oxidoreductase chain 2 (347 aa).

The next 10 helical transmembrane spans lie at 3–23 (PLTL…TVFS), 59–79 (YFLT…LNIL), 95–115 (PVLI…HFWV), 127–147 (GLIL…QISP), 149–169 (INPT…GWGG), 178–198 (ILAY…TFNP), 200–220 (TMVL…MMFM), 241–261 (VSTI…TGFI), 274–294 (GNII…YFYM), and 325–345 (LITP…ALSV).

This sequence belongs to the complex I subunit 2 family. As to quaternary structure, core subunit of respiratory chain NADH dehydrogenase (Complex I) which is composed of 45 different subunits. Interacts with TMEM242.

The protein resides in the mitochondrion inner membrane. The catalysed reaction is a ubiquinone + NADH + 5 H(+)(in) = a ubiquinol + NAD(+) + 4 H(+)(out). In terms of biological role, core subunit of the mitochondrial membrane respiratory chain NADH dehydrogenase (Complex I) which catalyzes electron transfer from NADH through the respiratory chain, using ubiquinone as an electron acceptor. Essential for the catalytic activity and assembly of complex I. In Oryctolagus cuniculus (Rabbit), this protein is NADH-ubiquinone oxidoreductase chain 2.